Reading from the N-terminus, the 219-residue chain is MEKLIVGTLLLTVLSGGISQSDMDGKAFIFPQESSTAYVSLIPRVKKSLQNFTLCLKAFTDLTRPYSIFSYNTKTQDNEILLFVQNSGEYMFYVGNSAAIFKAPTSLYDPVHICVNWESASGIAEFWLNGKPLGRKGLKKGYTVGGEAKIIIGQEQDSFGGNFDAKQSFVGEIWDVSLWDHVIPLEEAHDSCDGGNLINFRALTYEENGYVVTKPKLWT.

Positions Met1 to Ser19 are cleaved as a signal peptide. Residues Asp24–Thr219 form the Pentraxin (PTX) domain. Cysteines 55 and 114 form a disulfide. Ca(2+)-binding residues include Asp77, Asn78, Glu155, Gln156, Asp157, and Gln167.

The protein belongs to the pentraxin family. As to quaternary structure, homopentamer. Pentraxin (or pentaxin) have a discoid arrangement of 5 non-covalently bound subunits. Ca(2+) is required as a cofactor. Expression is restricted to small intestine, stomach and colon. Within colon, expressed in epithelial cells located within the lower to mid region of transverse and distal crypts, but not in proximal colon.

The protein resides in the secreted. The sequence is that of Mucosal pentraxin (Mptx1) from Rattus norvegicus (Rat).